A 476-amino-acid polypeptide reads, in one-letter code: Replication factor C large subunit (476 aa).

50-57 lines the ATP pocket; that stretch reads GPPGVGKT. The interval 447 to 476 is disordered; that stretch reads YEKGTKKGKGEKRRKGSDEGSGLLKWLKKD. Residues 452-461 are compositionally biased toward basic residues; sequence KKGKGEKRRK.

The protein belongs to the activator 1 small subunits family. RfcL subfamily. In terms of assembly, heteromultimer composed of small subunits (RfcS) and large subunits (RfcL).

Part of the RFC clamp loader complex which loads the PCNA sliding clamp onto DNA. The protein is Replication factor C large subunit of Ignicoccus hospitalis (strain KIN4/I / DSM 18386 / JCM 14125).